The chain runs to 269 residues: Undecaprenyl-diphosphatase (269 aa).

7 helical membrane passes run 40 to 59 (GITF…ALYF), 87 to 107 (WYII…EEPI), 116 to 136 (AIIA…DTLG), 160 to 180 (ALLP…FLGF), 188 to 208 (FSFL…VGHL), 220 to 240 (PLLI…ALLL), and 247 to 267 (SLYP…LFIF).

This sequence belongs to the UppP family.

The protein resides in the cell inner membrane. It carries out the reaction di-trans,octa-cis-undecaprenyl diphosphate + H2O = di-trans,octa-cis-undecaprenyl phosphate + phosphate + H(+). In terms of biological role, catalyzes the dephosphorylation of undecaprenyl diphosphate (UPP). Confers resistance to bacitracin. This Geobacter metallireducens (strain ATCC 53774 / DSM 7210 / GS-15) protein is Undecaprenyl-diphosphatase.